Reading from the N-terminus, the 462-residue chain is Bifunctional protein GlmU (462 aa).

The pyrophosphorylase stretch occupies residues 1–235 (MSYINFSAII…TFEIMGVNSK (235 aa)). UDP-N-acetyl-alpha-D-glucosamine-binding positions include 11 to 14 (LAAG), K25, Q80, 85 to 86 (GT), 107 to 109 (YGD), G144, E159, and N233. D109 contacts Mg(2+). Residue N233 participates in Mg(2+) binding. A linker region spans residues 236–256 (SDFVDLDKQYQQRKVQCLLSS). The tract at residues 257 to 462 (GLMIIDPNRF…LNWKRLKNKK (206 aa)) is N-acetyltransferase. UDP-N-acetyl-alpha-D-glucosamine contacts are provided by R339 and K357. H369 serves as the catalytic Proton acceptor. The UDP-N-acetyl-alpha-D-glucosamine site is built by Y372 and N383. Acetyl-CoA-binding positions include A386, 392–393 (NY), A429, and R446.

It in the N-terminal section; belongs to the N-acetylglucosamine-1-phosphate uridyltransferase family. In the C-terminal section; belongs to the transferase hexapeptide repeat family. Homotrimer. Requires Mg(2+) as cofactor.

The protein localises to the cytoplasm. The enzyme catalyses alpha-D-glucosamine 1-phosphate + acetyl-CoA = N-acetyl-alpha-D-glucosamine 1-phosphate + CoA + H(+). It carries out the reaction N-acetyl-alpha-D-glucosamine 1-phosphate + UTP + H(+) = UDP-N-acetyl-alpha-D-glucosamine + diphosphate. It participates in nucleotide-sugar biosynthesis; UDP-N-acetyl-alpha-D-glucosamine biosynthesis; N-acetyl-alpha-D-glucosamine 1-phosphate from alpha-D-glucosamine 6-phosphate (route II): step 2/2. The protein operates within nucleotide-sugar biosynthesis; UDP-N-acetyl-alpha-D-glucosamine biosynthesis; UDP-N-acetyl-alpha-D-glucosamine from N-acetyl-alpha-D-glucosamine 1-phosphate: step 1/1. It functions in the pathway bacterial outer membrane biogenesis; LPS lipid A biosynthesis. Catalyzes the last two sequential reactions in the de novo biosynthetic pathway for UDP-N-acetylglucosamine (UDP-GlcNAc). The C-terminal domain catalyzes the transfer of acetyl group from acetyl coenzyme A to glucosamine-1-phosphate (GlcN-1-P) to produce N-acetylglucosamine-1-phosphate (GlcNAc-1-P), which is converted into UDP-GlcNAc by the transfer of uridine 5-monophosphate (from uridine 5-triphosphate), a reaction catalyzed by the N-terminal domain. This Blochmanniella pennsylvanica (strain BPEN) protein is Bifunctional protein GlmU.